We begin with the raw amino-acid sequence, 197 residues long: uncharacterized protein (197 aa).

A run of 6 helical transmembrane segments spans residues 11 to 31 (AAMVRTGILGFGGGPSVIPLI), 50 to 70 (ILAIANALPGPIATKMAAYLG), 79 to 99 (AIVAILAHILPTCLAMVGLFA), 108 to 128 (AIVAGMIGAVTPVIAVMLGIM), 136 to 156 (ALKGFGWVTGILFFIIAFIGL), and 158 to 178 (TLQINPGLVIIIFLAYGAFHF).

This sequence belongs to the chromate ion transporter (CHR) (TC 2.A.51) family.

The protein resides in the cell membrane. This is an uncharacterized protein from Bacillus subtilis (strain 168).